We begin with the raw amino-acid sequence, 112 residues long: Replication initiation control protein YabA (112 aa).

Zn(2+) is bound by residues histidine 85, cysteine 87, cysteine 101, and cysteine 104.

The protein belongs to the YabA family. As to quaternary structure, homotetramer. Interacts with both DnaA and DnaN, acting as a bridge between these two proteins. It depends on Zn(2+) as a cofactor.

The protein resides in the cytoplasm. It is found in the nucleoid. Functionally, involved in control of chromosome replication initiation. Inhibits the cooperative binding of DnaA to the oriC region, thus negatively regulating initiation of chromosome replication. Inhibits the ability of DnaA-ATP to form a helix on DNA; does not disassemble preformed DnaA-DNA helices. Decreases the residence time of DnaA on the chromosome at its binding sites (oriC, replication forks and promoter-binding sites). Tethers DnaA to the replication machinery via the DNA polymerase beta sliding clamp subunit (dnaN). Associates with oriC and other DnaA targets on the chromosome in a DnaA-dependent manner. The sequence is that of Replication initiation control protein YabA from Lacticaseibacillus casei (strain BL23) (Lactobacillus casei).